Here is a 301-residue protein sequence, read N- to C-terminus: Oxygen-dependent coproporphyrinogen-III oxidase (301 aa).

Position 90 (serine 90) interacts with substrate. 2 residues coordinate a divalent metal cation: histidine 94 and histidine 104. The active-site Proton donor is the histidine 104. 106 to 108 lines the substrate pocket; sequence NVR. Positions 143 and 173 each coordinate a divalent metal cation. The tract at residues 238-273 is important for dimerization; that stretch reads YVEFNLVWDRGTLFGLQSGGRTESILMSLPPIVKWR. Residue 256–258 coordinates substrate; sequence GGR.

Belongs to the aerobic coproporphyrinogen-III oxidase family. Homodimer. A divalent metal cation serves as cofactor.

It is found in the cytoplasm. The catalysed reaction is coproporphyrinogen III + O2 + 2 H(+) = protoporphyrinogen IX + 2 CO2 + 2 H2O. It functions in the pathway porphyrin-containing compound metabolism; protoporphyrin-IX biosynthesis; protoporphyrinogen-IX from coproporphyrinogen-III (O2 route): step 1/1. Involved in the heme biosynthesis. Catalyzes the aerobic oxidative decarboxylation of propionate groups of rings A and B of coproporphyrinogen-III to yield the vinyl groups in protoporphyrinogen-IX. This chain is Oxygen-dependent coproporphyrinogen-III oxidase, found in Nitrosomonas eutropha (strain DSM 101675 / C91 / Nm57).